Here is an 878-residue protein sequence, read N- to C-terminus: Pyruvate dehydrogenase phosphatase regulatory subunit, mitochondrial (878 aa).

The N-terminal 93 residues, 1 to 93 (MLYRLLSIVQ…CAGILSTARH (93 aa)), are a transit peptide targeting the mitochondrion.

Belongs to the GcvT family. Heterodimer of a catalytic (PDP1) and a regulatory (PDPR) subunit.

Its subcellular location is the mitochondrion matrix. Its function is as follows. Decreases the sensitivity of PDP1 to magnesium ions, and this inhibition is reversed by the polyamine spermine. This Mus musculus (Mouse) protein is Pyruvate dehydrogenase phosphatase regulatory subunit, mitochondrial (Pdpr).